We begin with the raw amino-acid sequence, 538 residues long: Probable folate-biopterin transporter 9, chloroplastic (538 aa).

The N-terminal 57 residues, 1 to 57 (MNNPLLSISNPVKFFKPPIPYRISLNTTINKKQKHQSKTLVVKSNKRSTTSLTSSVS), are a transit peptide targeting the chloroplast. 12 consecutive transmembrane segments (helical) span residues 85 to 105 (VLLCALGYWVQGLRCFSWLAL), 129 to 149 (LPMVAKPLYGVLSDVLYIGGA), 152 to 172 (VPYISVGVLLQGLAWGSLAIF), 178 to 198 (VLPSLMAFILLSNLGASITEV), 220 to 240 (ALMASAVGGILGNLLGGYCLL), 246 to 266 (ILFLAFTALLSLQLIVSLSSK), 309 to 329 (LIWIVSSIALVPLLSGSVFCY), 339 to 359 (SVIGMSKVIGQLMLLCLTVVY), 370 to 390 (ALIHIVQLLYAFSLLFDYILV), 395 to 415 (LAFGISNTAFVLCFSSVAEIL), 447 to 467 (LCLSSVVSGFTGVGMANMIGI), and 479 to 499 (ILIQSLAALVPLWFIHYVPML).

It belongs to the major facilitator superfamily. Folate-biopterin transporter (TC 2.A.71) family.

It localises to the plastid. It is found in the chloroplast membrane. Its function is as follows. Could mediate folate transport. In Arabidopsis thaliana (Mouse-ear cress), this protein is Probable folate-biopterin transporter 9, chloroplastic.